Consider the following 211-residue polypeptide: Bacteriorhodopsin (211 aa).

A helical membrane pass occupies residues 1-19; it reads IWLWLGTAGMFLGMLYFIA. Over 20–33 the chain is Cytoplasmic; it reads RGWGETDSRRQKFY. A helical membrane pass occupies residues 34-52; that stretch reads IATILITAIAFVNYLAMAL. Residues 53-68 are Extracellular-facing; that stretch reads GFGLTIVEFAGEEHPI. A helical transmembrane segment spans residues 69 to 86; the sequence is YWARYSDWLFTTPLLLYD. The Cytoplasmic portion of the chain corresponds to 87 to 97; sequence LGLLAGADRNT. Residues 98–117 traverse the membrane as a helical segment; that stretch reads ITSLVSLDVLMIGTGLVATL. Residues 118 to 130 are Extracellular-facing; sequence SAGSGVLSAGAER. Residues 131–150 form a helical membrane-spanning segment; the sequence is LVWWGISTAFLLVLLYFLFS. Over 151 to 168 the chain is Cytoplasmic; that stretch reads SLSGRVADLPSDTRSTFK. A helical transmembrane segment spans residues 169-187; that stretch reads TLRNLVTVVWLVYPVWWLI. Over 188–199 the chain is Extracellular; that stretch reads GTEGIGLVGIGI. Residues 200–211 form a helical membrane-spanning segment; that stretch reads ETAGFMVIDLTA.

The protein belongs to the archaeal/bacterial/fungal opsin family.

The protein localises to the cell membrane. Light-driven proton pump. This chain is Bacteriorhodopsin (bop), found in Halobacterium halobium (strain port).